The following is a 402-amino-acid chain: MSRVSQARNLGKYFLLIDNMLVVLGFFVVFPLISIRFIDQMGWAAVMVGIALGLRQFIQQGLGIFGGAIADRFGAKPMIVTGMLMRAAGFATMGIAHEPWLLWFSCFLSGLGGTLFDPPRSALVVKLIRPEQRGRFFSLLMMQDSAGAVIGALLGSWLLQYDFRLVCATGAILFILCALFNAWLLPAWKLSTVRTPVREGMRRVMSDKRFVTYVLTLAGYYMLAVQVMLMLPIMVNDIAGSPAAVKWMYAIEACLSLTLLYPIARWSEKRFRLEHRLMAGLLVMSLSMIPIGMVGNLQQLFTLICAFYIGSVIAEPARETLSASLADARARGSYMGFSRLGLAIGGAIGYIGGGWLFDMGKALTQPELPWMMLGIIGFITFLALGWQFSHKRTPRRMLEPGA.

At 1–12 (MSRVSQARNLGK) the chain is on the cytoplasmic side. The helical transmembrane segment at 13 to 33 (YFLLIDNMLVVLGFFVVFPLI) threads the bilayer. Residues 34–98 (SIRFIDQMGW…GFATMGIAHE (65 aa)) lie on the Periplasmic side of the membrane. The chain crosses the membrane as a helical span at residues 99 to 116 (PWLLWFSCFLSGLGGTLF). Topologically, residues 117–138 (DPPRSALVVKLIRPEQRGRFFS) are cytoplasmic. Residues 139–159 (LLMMQDSAGAVIGALLGSWLL) traverse the membrane as a helical segment. Residues 160–164 (QYDFR) are Periplasmic-facing. A helical transmembrane segment spans residues 165 to 185 (LVCATGAILFILCALFNAWLL). Topologically, residues 186–213 (PAWKLSTVRTPVREGMRRVMSDKRFVTY) are cytoplasmic. Residues 214–234 (VLTLAGYYMLAVQVMLMLPIM) traverse the membrane as a helical segment. Topologically, residues 235–243 (VNDIAGSPA) are periplasmic. The helical transmembrane segment at 244-264 (AVKWMYAIEACLSLTLLYPIA) threads the bilayer. Topologically, residues 265–276 (RWSEKRFRLEHR) are cytoplasmic. Residues 277–297 (LMAGLLVMSLSMIPIGMVGNL) form a helical membrane-spanning segment. The Periplasmic segment spans residues 298 to 299 (QQ). Residues 300 to 320 (LFTLICAFYIGSVIAEPARET) form a helical membrane-spanning segment. Over 321-339 (LSASLADARARGSYMGFSR) the chain is Cytoplasmic. Residues 340–360 (LGLAIGGAIGYIGGGWLFDMG) traverse the membrane as a helical segment. At 361-367 (KALTQPE) the chain is on the periplasmic side. A helical transmembrane segment spans residues 368–388 (LPWMMLGIIGFITFLALGWQF). The Cytoplasmic portion of the chain corresponds to 389–402 (SHKRTPRRMLEPGA).

Belongs to the major facilitator superfamily. DHA1 family. MdtH (TC 2.A.1.2.21) subfamily.

The protein resides in the cell inner membrane. This is Multidrug resistance protein MdtH from Salmonella paratyphi C (strain RKS4594).